The primary structure comprises 462 residues: GTPase Der (462 aa).

2 consecutive EngA-type G domains span residues 3–170 and 201–372; these read ITIA…TSQK and IKIA…FNSI. GTP-binding positions include 9-16, 57-61, 122-125, 207-214, 254-258, and 319-322; these read GRTNVGKS, DTPGI, NKIE, GKPNVGKS, DTAGI, and NKND. The KH-like domain occupies 373 to 457; that stretch reads KKIHTSKITE…SIVLYFKSSK (85 aa).

The protein belongs to the TRAFAC class TrmE-Era-EngA-EngB-Septin-like GTPase superfamily. EngA (Der) GTPase family. In terms of assembly, associates with the 50S ribosomal subunit.

GTPase that plays an essential role in the late steps of ribosome biogenesis. This Buchnera aphidicola subsp. Baizongia pistaciae (strain Bp) protein is GTPase Der.